We begin with the raw amino-acid sequence, 324 residues long: Germination protease (324 aa).

Residues Met-1 to Asp-10 constitute a propeptide that is removed on maturation.

It belongs to the peptidase A25 family. In terms of assembly, homotetramer. In terms of processing, autoproteolytically processed. The inactive tetrameric zymogen termed p46 autoprocesses to a smaller form termed p41, which is active only during spore germination.

It catalyses the reaction Endopeptidase action with P4 Glu or Asp, P1 preferably Glu &gt; Asp, P1' hydrophobic and P2' Ala.. In terms of biological role, initiates the rapid degradation of small, acid-soluble proteins during spore germination. The chain is Germination protease from Caldanaerobacter subterraneus subsp. tengcongensis (strain DSM 15242 / JCM 11007 / NBRC 100824 / MB4) (Thermoanaerobacter tengcongensis).